The primary structure comprises 509 residues: L-aspartate semialdehyde sulfurtransferase (509 aa).

The Cysteine persulfide intermediate role is filled by cysteine 133. CBS domains lie at 394–450 (LSKP…NKKT) and 455–509 (MTRN…GGKK). S-methyl-5'-thioadenosine contacts are provided by serine 395, isoleucine 399, and histidine 421. Residues aspartate 439, threonine 456, isoleucine 460, and 479–482 (NISG) contribute to the S-adenosyl-L-methionine site. S-methyl-5'-thioadenosine is bound at residue 497–500 (TSED).

This sequence belongs to the L-aspartate semialdehyde sulfurtransferase family. In terms of assembly, homodimer. May form a complex with MJ0099.

It carries out the reaction L-aspartate 4-semialdehyde + reduced 2[4Fe-4S]-[ferredoxin] + hydrogen sulfide + 3 H(+) = oxidized 2[4Fe-4S]-[ferredoxin] + L-homocysteine + H2O. Its pathway is amino-acid biosynthesis. Its activity is regulated as follows. The ligand-induced conformational reorganization of the protein could be an important regulatory mechanism. Functionally, required for O-acetylhomoserine sulfhydrylase (OAHS)-independent homocysteine (Hcy) biosynthesis. Together with MJ0099, catalyzes the condensation of sulfide with aspartate semialdehyde to generate homocysteine. Likely functions through persulfide intermediate. This Methanocaldococcus jannaschii (strain ATCC 43067 / DSM 2661 / JAL-1 / JCM 10045 / NBRC 100440) (Methanococcus jannaschii) protein is L-aspartate semialdehyde sulfurtransferase.